The chain runs to 488 residues: Probable glycine dehydrogenase (decarboxylating) subunit 2 (488 aa).

N6-(pyridoxal phosphate)lysine is present on Lys274.

It belongs to the GcvP family. C-terminal subunit subfamily. The glycine cleavage system is composed of four proteins: P, T, L and H. In this organism, the P 'protein' is a heterodimer of two subunits. Pyridoxal 5'-phosphate is required as a cofactor.

The catalysed reaction is N(6)-[(R)-lipoyl]-L-lysyl-[glycine-cleavage complex H protein] + glycine + H(+) = N(6)-[(R)-S(8)-aminomethyldihydrolipoyl]-L-lysyl-[glycine-cleavage complex H protein] + CO2. The glycine cleavage system catalyzes the degradation of glycine. The P protein binds the alpha-amino group of glycine through its pyridoxal phosphate cofactor; CO(2) is released and the remaining methylamine moiety is then transferred to the lipoamide cofactor of the H protein. The chain is Probable glycine dehydrogenase (decarboxylating) subunit 2 from Listeria monocytogenes serotype 4a (strain HCC23).